A 134-amino-acid chain; its full sequence is U-scoloptoxin(05)-Er2a (134 aa).

An N-terminal signal peptide occupies residues 1–19; the sequence is MTFVVAAVVLLTVVPLATP.

This sequence belongs to the scoloptoxin-05 family. Post-translationally, contains 5 disulfide bonds. In terms of tissue distribution, expressed by the venom gland.

The protein localises to the secreted. This Ethmostigmus rubripes (Giant centipede) protein is U-scoloptoxin(05)-Er2a.